Consider the following 612-residue polypeptide: Methionine--tRNA ligase (612 aa).

Residues 12–22 (PYANGPRHIGH) carry the 'HIGH' region motif. Zn(2+) is bound by residues Cys-144, Cys-147, Cys-157, and Cys-160. Positions 348–352 (KFSSS) match the 'KMSKS' region motif. Ser-351 is an ATP binding site.

Belongs to the class-I aminoacyl-tRNA synthetase family. MetG type 1 subfamily. As to quaternary structure, monomer. Zn(2+) serves as cofactor.

The protein resides in the cytoplasm. It carries out the reaction tRNA(Met) + L-methionine + ATP = L-methionyl-tRNA(Met) + AMP + diphosphate. Functionally, is required not only for elongation of protein synthesis but also for the initiation of all mRNA translation through initiator tRNA(fMet) aminoacylation. This Corynebacterium kroppenstedtii (strain DSM 44385 / JCM 11950 / CIP 105744 / CCUG 35717) protein is Methionine--tRNA ligase.